We begin with the raw amino-acid sequence, 163 residues long: Transcription elongation factor GreA (163 aa).

Residues 11-38 (FKQLEKELDRLKKERPGVIQAIKEAREE) are a coiled coil.

Belongs to the GreA/GreB family.

Functionally, necessary for efficient RNA polymerase transcription elongation past template-encoded arresting sites. The arresting sites in DNA have the property of trapping a certain fraction of elongating RNA polymerases that pass through, resulting in locked ternary complexes. Cleavage of the nascent transcript by cleavage factors such as GreA or GreB allows the resumption of elongation from the new 3'terminus. GreA releases sequences of 2 to 3 nucleotides. The sequence is that of Transcription elongation factor GreA from Nitratidesulfovibrio vulgaris (strain ATCC 29579 / DSM 644 / CCUG 34227 / NCIMB 8303 / VKM B-1760 / Hildenborough) (Desulfovibrio vulgaris).